The following is a 617-amino-acid chain: Chitin elicitor receptor kinase 1 (617 aa).

The N-terminal stretch at 1–23 (MKLKISLIAPILLLFSFFFAVES) is a signal peptide. At 24 to 232 (KCRTSCPLAL…KSSKQDGVGA (209 aa)) the chain is on the extracellular side. 3 disulfide bridges follow: Cys-25–Cys-93, Cys-29–Cys-155, and Cys-91–Cys-153. N-linked (GlcNAc...) asparagine glycans are attached at residues Asn-40, Asn-52, and Asn-102. One can recognise a LysM 1; degenerate domain in the interval 46 to 74 (VINQNLNSSIAPYDQINFDPILRYNSNIK). Residues 108–140 (RQEDTYERVAISNYANLTTMESLQARNPFPATN) form the LysM 2; degenerate domain. Residue 109-115 (QEDTYER) coordinates chitin. N-linked (GlcNAc...) asparagine glycosylation occurs at Asn-123. 137–143 (PATNIPL) contacts chitin. Residue Asn-152 is glycosylated (N-linked (GlcNAc...) asparagine). Residues 168 to 211 (VTYPLRPEDSLSSIARSSGVSADILQRYNPGVNFNSGNGIVYVP) form the LysM 3 domain. The chain crosses the membrane as a helical span at residues 233–253 (GVIAGIVIGVIVALLLILFIV). Residues 254–617 (YYAYRKNKSK…EDLVSLMSGR (364 aa)) lie on the Cytoplasmic side of the membrane. Ser-266, Ser-268, and Ser-274 each carry phosphoserine. Residues 322 to 594 (FNLSFKIGQG…YIVVALSTLF (273 aa)) enclose the Protein kinase domain. ATP is bound by residues 328–336 (IGQGGFGAV) and Lys-349. Residue Tyr-390 is modified to Phosphotyrosine. The active-site Proton acceptor is the Asp-441. Phosphothreonine is present on residues Thr-479 and Thr-519.

This sequence belongs to the protein kinase superfamily. Ser/Thr protein kinase family. In terms of assembly, forms homodimers and homooligomers. Homodimerization is required to trigger plant defenses. Binds to chitin, chitosan and chito-oligomer oligosaccharide elicitors. Interaction with chitin octamer (NAG(8)) promotes homodimerization while shorter chitin oligomers inhibit homodimerization. Interacts with Pseudomonas syringae hopAB2/avrPtoB. Interacts (preferentially when unphosphorylated) with PBL27 at the plasma membrane. Binds to IOS1. In terms of processing, autophosphorylated. Autophosphorylation is induced by chitin and derivatives. Ubiquitinated and targeted to the proteasome by hopAB2/avrPtoB of Pseudomonas syringae pv. tomato DC3000. In terms of tissue distribution, expressed ubiquitously, with lowest expression in pollen.

It is found in the cell membrane. The enzyme catalyses L-seryl-[protein] + ATP = O-phospho-L-seryl-[protein] + ADP + H(+). It catalyses the reaction L-threonyl-[protein] + ATP = O-phospho-L-threonyl-[protein] + ADP + H(+). Activated by chitin-mediated homodimerization. In terms of biological role, lysin motif (LysM) receptor kinase that functions as a cell surface receptor in chitin elicitor (chitooligosaccharides) signaling leading to innate immunity toward both biotic and abiotic stresses (e.g. tolerance to salinity, heavy-metal stresses, and Botrytis cinerea infection). Recognizes microbe-derived N-acetylglucosamine (NAG)-containing ligands. Involved in the resistance to pathogenic fungi Alternaria brassicicola and Erysiphe cichoracearum, probably by sensing microbe-associated molecular patterns (MAMP) and pathogen-associated molecular patterns (PAMP). Plays an essential role in detecting peptidoglycans (e.g. PGNs) and restricting bacterial growth. Target of the bacterial type III effector E3-ligase protein hopAB2/avrPtoB of Pseudomonas syringae pv. tomato DC3000 that mediates ubiquitination and subsequent proteolysis, thus blocking all defense responses by suppressing PAMP-triggered immunity (PTI). Mediates chitin-induced phosphorylation of PBL27. In Arabidopsis thaliana (Mouse-ear cress), this protein is Chitin elicitor receptor kinase 1 (CERK1).